Consider the following 148-residue polypeptide: Large ribosomal subunit protein bL9 (148 aa).

This sequence belongs to the bacterial ribosomal protein bL9 family.

Binds to the 23S rRNA. The polypeptide is Large ribosomal subunit protein bL9 (Staphylococcus aureus (strain Newman)).